The primary structure comprises 501 residues: Orsellinic acid/F9775 biosynthesis cluster protein D (501 aa).

The interval 137–189 (EVTPTTEDEDDEENESENDEEEGDVDLEEQEDDNGGRQSTTVTTSPGPSAPSV) is disordered. The segment covering 142–169 (TEDEDDEENESENDEEEGDVDLEEQEDD) has biased composition (acidic residues). Over residues 172 to 183 (GRQSTTVTTSPG) the composition is skewed to polar residues.

Its function is as follows. Part of the gene cluster that mediates the biosynthesis of orsellinic acid, as well as of the cathepsin K inhibitors F9775 A and F9775 B. The non-reducing polyketide synthase orsA produces orsellinic acid by condensing acetyl-CoA with 3 malonyl-CoA units. Further modifications by the decarboxylase orsB and the tyrosinase-like protein orsC lead to the production of F9775 A and F9775 B. The functions of orsD and orsE remain unclear since only orsB and orsC are required to convert orsellinic acid into F9775 A and F9775 B. The chain is Orsellinic acid/F9775 biosynthesis cluster protein D from Emericella nidulans (strain FGSC A4 / ATCC 38163 / CBS 112.46 / NRRL 194 / M139) (Aspergillus nidulans).